The sequence spans 354 residues: MTELKNDRYLRALLRQPVDVTPVWMMRQAGRYLPEYKATRAQAGDFMSLCKNAELACEVTLQPLRRYPLDAAILFSDILTVPDAMGLGLYFEAGEGPRFTAPVTCKADVDKLPIPDPEDELGYVMNAVRTIRRELKGEVPLIGFSGSPWTLATYMVEGGSSKAFTVIKKMMYADPQALHLLLDKLAKSVTLYLNAQIKAGAQSVMIFDTWGGVLTGRDYQQFSLYYMHKIVDGLLRENDGRRVPVTLFTKGGGQWLEAMAETGCDALGLDWTTDIADARRRVGHKVALQGNMDPSMLYAPPARIEDEVATILAGFGQGEGHVFNLGHGIHQDVPPEHAGAFVEAVHRLSAQYHN.

Substrate-binding positions include 27–31 (RQAGR), aspartate 77, tyrosine 154, threonine 209, and histidine 327.

This sequence belongs to the uroporphyrinogen decarboxylase family. As to quaternary structure, homodimer.

It is found in the cytoplasm. It carries out the reaction uroporphyrinogen III + 4 H(+) = coproporphyrinogen III + 4 CO2. The protein operates within porphyrin-containing compound metabolism; protoporphyrin-IX biosynthesis; coproporphyrinogen-III from 5-aminolevulinate: step 4/4. Functionally, catalyzes the decarboxylation of four acetate groups of uroporphyrinogen-III to yield coproporphyrinogen-III. The polypeptide is Uroporphyrinogen decarboxylase (Salmonella newport (strain SL254)).